The primary structure comprises 118 residues: Succinate dehydrogenase assembly factor 1, mitochondrial (118 aa).

Positions 14-16 (LYR) match the LYR motif 1; required for interaction with HSC20 motif. The LYR motif 2; not required for interaction with HSC20 signature appears at 53–55 (LYR). The interval 53 to 65 (LYRRGRRQLQLLR) is interaction with SDHB. Residues 68–118 (HATAMGTFVRPRGPAEEPGDATAPGTRLDDGGAPKNSCEDTGARETRSDGR) form a disordered region. Residues 94 to 118 (RLDDGGAPKNSCEDTGARETRSDGR) are compositionally biased toward basic and acidic residues.

It belongs to the complex I LYR family. SDHAF1 subfamily. Interacts with SDHB within an SDHA-SDHB subcomplex. Also interacts with the iron-sulfur transfer complex formed by HSC20, HSPA9 and ISCU through direct binding to HSC20. Binding of SDHAF1 to SDHB precedes and is necessary for recruitment of the iron-sulfur transfer complex by SDHAF1.

Its subcellular location is the mitochondrion matrix. Plays an essential role in the assembly of succinate dehydrogenase (SDH), an enzyme complex (also referred to as respiratory complex II) that is a component of both the tricarboxylic acid (TCA) cycle and the mitochondrial electron transport chain, and which couples the oxidation of succinate to fumarate with the reduction of ubiquinone (coenzyme Q) to ubiquinol. Promotes maturation of the iron-sulfur protein subunit Sdhb of the SDH catalytic dimer, protecting it from the deleterious effects of oxidants. May act together with SDHAF3. Contributes to iron-sulfur cluster incorporation into SDHB by binding to SDHB and recruiting the iron-sulfur transfer complex formed by HSC20, HSPA9 and ISCU through direct binding to HSC20. This is Succinate dehydrogenase assembly factor 1, mitochondrial from Mus musculus (Mouse).